The following is a 302-amino-acid chain: uncharacterized protein (302 aa).

Residues 13–89 (QTLFKFLKKT…VNLDIVYEDN (77 aa)) form the S4 RNA-binding domain. D141 is a catalytic residue.

Belongs to the pseudouridine synthase RluA family.

The catalysed reaction is a uridine in RNA = a pseudouridine in RNA. This is an uncharacterized protein from Mycoplasma capricolum subsp. capricolum (strain California kid / ATCC 27343 / NCTC 10154).